The following is a 169-amino-acid chain: Probable phospholipid hydroperoxide glutathione peroxidase (169 aa).

Cysteine 43 is an active-site residue.

It belongs to the glutathione peroxidase family. In terms of tissue distribution, germinating seed, apex, flower, as well as in stressed tissues.

The protein localises to the cytoplasm. It catalyses the reaction a hydroperoxy polyunsaturated fatty acid + 2 glutathione = a hydroxy polyunsaturated fatty acid + glutathione disulfide + H2O. Functionally, protects cells and enzymes from oxidative damage, by catalyzing the reduction of hydrogen peroxide, lipid peroxides and organic hydroperoxide, by glutathione. The chain is Probable phospholipid hydroperoxide glutathione peroxidase from Nicotiana sylvestris (Wood tobacco).